We begin with the raw amino-acid sequence, 445 residues long: Putative MgpC-like protein MPN_464 (445 aa).

A disordered region spans residues 23–44 (STTVAVQKSDSSGSQGQGTTDN). Low complexity predominate over residues 31–43 (SDSSGSQGQGTTD).

This sequence belongs to the MgpC family.

This is Putative MgpC-like protein MPN_464 from Mycoplasma pneumoniae (strain ATCC 29342 / M129 / Subtype 1) (Mycoplasmoides pneumoniae).